We begin with the raw amino-acid sequence, 476 residues long: Aspartyl/glutamyl-tRNA(Asn/Gln) amidotransferase subunit B (476 aa).

It belongs to the GatB/GatE family. GatB subfamily. In terms of assembly, heterotrimer of A, B and C subunits.

The catalysed reaction is L-glutamyl-tRNA(Gln) + L-glutamine + ATP + H2O = L-glutaminyl-tRNA(Gln) + L-glutamate + ADP + phosphate + H(+). It catalyses the reaction L-aspartyl-tRNA(Asn) + L-glutamine + ATP + H2O = L-asparaginyl-tRNA(Asn) + L-glutamate + ADP + phosphate + 2 H(+). Its function is as follows. Allows the formation of correctly charged Asn-tRNA(Asn) or Gln-tRNA(Gln) through the transamidation of misacylated Asp-tRNA(Asn) or Glu-tRNA(Gln) in organisms which lack either or both of asparaginyl-tRNA or glutaminyl-tRNA synthetases. The reaction takes place in the presence of glutamine and ATP through an activated phospho-Asp-tRNA(Asn) or phospho-Glu-tRNA(Gln). This Geobacillus thermodenitrificans (strain NG80-2) protein is Aspartyl/glutamyl-tRNA(Asn/Gln) amidotransferase subunit B.